The chain runs to 207 residues: Outer-membrane lipoprotein LolB (207 aa).

A signal peptide spans Met-1–Ala-21. Cys-22 carries N-palmitoyl cysteine lipidation. A lipid anchor (S-diacylglycerol cysteine) is attached at Cys-22.

Belongs to the LolB family. In terms of assembly, monomer.

The protein localises to the cell outer membrane. Plays a critical role in the incorporation of lipoproteins in the outer membrane after they are released by the LolA protein. The polypeptide is Outer-membrane lipoprotein LolB (Escherichia coli (strain SMS-3-5 / SECEC)).